The sequence spans 68 residues: Antimicrobial peptide UyCT5 (68 aa).

The signal sequence occupies residues 1–23; the sequence is MKNQFAILLLAVVFLQLISQSDA. At L36 the chain carries Leucine amide. Residues 40–68 constitute a propeptide that is removed on maturation; sequence GLKNADRLDELFDGDISDADLDFLRELMR.

This sequence belongs to the non-disulfide-bridged peptide (NDBP) superfamily. Short antimicrobial peptide (group 4) family. Expressed by the venom gland.

The protein resides in the secreted. It localises to the target cell membrane. In terms of biological role, antimicrobial peptide that inhibits the growth of Gram-positive (S.aureus, MIC=1 uM) and Gram-negative bacteria (E.coli, MIC=15 uM and P.aeruginosa, MIC=2 uM). It also shows 37% of hemolysis when 15 uM are tested (93% at 50 uM). This Urodacus yaschenkoi (Inland robust scorpion) protein is Antimicrobial peptide UyCT5.